Consider the following 216-residue polypeptide: 3-isopropylmalate dehydratase small subunit (216 aa).

The protein belongs to the LeuD family. LeuD type 1 subfamily. As to quaternary structure, heterodimer of LeuC and LeuD.

The enzyme catalyses (2R,3S)-3-isopropylmalate = (2S)-2-isopropylmalate. It functions in the pathway amino-acid biosynthesis; L-leucine biosynthesis; L-leucine from 3-methyl-2-oxobutanoate: step 2/4. Functionally, catalyzes the isomerization between 2-isopropylmalate and 3-isopropylmalate, via the formation of 2-isopropylmaleate. This Psychrobacter arcticus (strain DSM 17307 / VKM B-2377 / 273-4) protein is 3-isopropylmalate dehydratase small subunit.